A 425-amino-acid polypeptide reads, in one-letter code: Perilipin-2 (425 aa).

N-acetylalanine is present on Ala2. Ser213 is modified (phosphoserine). Residue Tyr230 is modified to Phosphotyrosine.

This sequence belongs to the perilipin family. Interacts with IRGC. In terms of processing, acylated; primarily with C14, C16 and C18 fatty acids. Post-translationally, phosphorylation at Tyr-230 by isoform 1 of CHKA (CHKalpha2) promotes dissociation from lipid droplets: dissociation is followed by recruitment of autophagosome machinery to lipid droplets and subsequent lipid droplet lipolysis. Polyubiquitination of Nt-acetylatable A-PLIN2 by MARCHF6 lead to degradation by 26S proteasomes. Adipose tissue specific. Expressed abundantly and preferentially in fat pads.

The protein localises to the membrane. It is found in the lipid droplet. Its function is as follows. Structural component of lipid droplets, which is required for the formation and maintenance of lipid storage droplets. This Mus musculus (Mouse) protein is Perilipin-2.